The primary structure comprises 837 residues: Protein ROD1 (837 aa).

A phosphoserine mark is found at Ser138 and Ser141. Lys401 is covalently cross-linked (Glycyl lysine isopeptide (Lys-Gly) (interchain with G-Cter in ubiquitin)). A Phosphoserine modification is found at Ser436. The PY-motif motif lies at Pro487–Tyr490. Residue Ser536 is modified to Phosphoserine. The PY-motif motif lies at Pro656–Tyr659. Disordered regions lie at residues Glu675–Leu726 and Ser763–Ser837. Positions Thr685–Arg703 are enriched in low complexity. Polar residues predominate over residues Pro716–Leu726. 2 positions are modified to phosphoserine: Ser720 and Ser725. Low complexity predominate over residues Ser763–Asn773. A compositionally biased stretch (basic and acidic residues) spans Ser774–Glu792. The span at Ser805–Ser815 shows a compositional bias: low complexity.

The protein belongs to the arrestin family. Interacts with RSP5 via its 2 PY-motifs.

The protein resides in the membrane. In terms of biological role, mediates resistance to o-dinitrobenzene, calcium and zinc. This Saccharomyces cerevisiae (strain ATCC 204508 / S288c) (Baker's yeast) protein is Protein ROD1 (ROD1).